A 207-amino-acid polypeptide reads, in one-letter code: Ubiquitin-conjugating enzyme E2 E3 (207 aa).

Residues 1 to 10 show a composition bias toward basic and acidic residues; the sequence is MSSDRQRSDD. Positions 1–63 are disordered; that stretch reads MSSDRQRSDD…KTTAKLSTSA (63 aa). Serine 2 carries the post-translational modification N-acetylserine. Serine 8 carries the phosphoserine modification. Residues 50 to 63 are compositionally biased toward low complexity; that stretch reads KLSSKTTAKLSTSA. The 147-residue stretch at 61–207 folds into the UBC core domain; that stretch reads TSAKRIQKEL…ARQWTKRYAT (147 aa). Catalysis depends on cysteine 145, which acts as the Glycyl thioester intermediate.

This sequence belongs to the ubiquitin-conjugating enzyme family. The ubiquitin-loaded form interacts specifically with importin-11 (IPO11), leading to its import into the nucleus. Interacts with NEDD4L.

It is found in the nucleus. It localises to the cytoplasm. The catalysed reaction is S-ubiquitinyl-[E1 ubiquitin-activating enzyme]-L-cysteine + [E2 ubiquitin-conjugating enzyme]-L-cysteine = [E1 ubiquitin-activating enzyme]-L-cysteine + S-ubiquitinyl-[E2 ubiquitin-conjugating enzyme]-L-cysteine.. It participates in protein modification; protein ubiquitination. Functionally, accepts ubiquitin from the E1 complex and catalyzes its covalent attachment to other proteins. In vitro catalyzes 'Lys-11'- and 'Lys-48'-, as well as 'Lys-63'-linked polyubiquitination. Participates in the regulation of transepithelial sodium transport in renal cells. The polypeptide is Ubiquitin-conjugating enzyme E2 E3 (UBE2E3) (Bos taurus (Bovine)).